A 165-amino-acid chain; its full sequence is Endoribonuclease YbeY (165 aa).

H119, H123, and H129 together coordinate Zn(2+).

Belongs to the endoribonuclease YbeY family. The cofactor is Zn(2+).

It is found in the cytoplasm. Functionally, single strand-specific metallo-endoribonuclease involved in late-stage 70S ribosome quality control and in maturation of the 3' terminus of the 16S rRNA. The protein is Endoribonuclease YbeY of Streptomyces griseus subsp. griseus (strain JCM 4626 / CBS 651.72 / NBRC 13350 / KCC S-0626 / ISP 5235).